The chain runs to 86 residues: Serine protease inhibitor Kazal-type 4 (86 aa).

The N-terminal stretch at 1–26 (MAVRLWVVALALAALFIVDREVPVSA) is a signal peptide. A Kazal-like domain is found at 31-86 (FSRMPICEHMTESPDCSRIYDPVCGTDGVTYESECKLCLARIENKQDIQIVKDGEC). 3 disulfides stabilise this stretch: Cys37–Cys68, Cys46–Cys65, and Cys54–Cys86.

As to expression, synthesized in duodenal goblet cells and in monocytes in bone marrow and blood.

It localises to the secreted. In terms of biological role, inhibits the glucose-induced insulin secretion from perfused pancreas; also plays a role in the immune system. Does not inhibit trypsin. This Sus scrofa (Pig) protein is Serine protease inhibitor Kazal-type 4 (SPINK4).